Here is a 746-residue protein sequence, read N- to C-terminus: Transcription factor pbcR (746 aa).

Residues M1–F12 are compositionally biased toward polar residues. Residues M1–K40 form a disordered region. The segment at residues C47–C76 is a DNA-binding region (zn(2)-C6 fungal-type). The segment at E109–L131 is disordered. Positions A120 to L131 are enriched in polar residues.

Its subcellular location is the nucleus. Functionally, transcription factor; part of the gene cluster that mediates the biosynthesis of the diterpene ent-pimara-8(14),15-diene (PD). Acts as a positive regulator for the cluster gene. Down-regulates the expression of the penicillin gene cluster, two putative polyketide clusters, and one putative nonribosomal peptide cluster. The sequence is that of Transcription factor pbcR from Emericella nidulans (strain FGSC A4 / ATCC 38163 / CBS 112.46 / NRRL 194 / M139) (Aspergillus nidulans).